A 509-amino-acid polypeptide reads, in one-letter code: MNESEIPIDIHTLKLQDWLISRRIVPKNVQQELREIHRKISNALQDMPSNEQLIKLLARTNINYYHVKEIIEILKQTEKDTKSVFGTYGSQRMKDWQEISRLYEKNATYLAETAQIFVRNVNYEIPGVRKQMARLEQQADETQKRAHDLNKPESQILADHSALLEQLGVKGDNLHAEFVQVLSGLPELYDKSLVGIANIQPGIDLYAEVSGNKQVLPILNHLVEFGNTTVYQYIHKEAPLAVEEPPIRLNLSEGNASKDDNAVAEIDFGTDDNGGTSSTVSAEIIDYGDFGSGDLPESDGGNIDWGIESAPTDAVEINFDIPVEEYGIVVEGTGMDGGTAKGDQAYTLLDSPNYRDRFLDEIYELESFLRMRIYELKQLESSSDIMFSLMDNIATHDGESIWKILVSVEKIIQQTSDKQTQHLFQLKHSPKYANMLATKLQQMTKAVEKLRATREALKQLTIELREQRQDLNPVLEELIAQTRTLQSHIEKDISKRYKNRVVNLMGGVN.

Belongs to the CDK5RAP3 family.

The protein localises to the nucleus. The protein resides in the cytoplasm. Functionally, substrate adapter of E3 ligase complexes mediating ufmylation, the covalent attachment of the ubiquitin-like modifier UFM1 to substrate proteins, and which is involved in various processes, such as ribosome recycling and reticulophagy (also called ER-phagy). This chain is CDK5RAP3 protein homolog, found in Drosophila melanogaster (Fruit fly).